Reading from the N-terminus, the 190-residue chain is Elongation factor P (190 aa).

Belongs to the elongation factor P family.

It localises to the cytoplasm. It participates in protein biosynthesis; polypeptide chain elongation. Functionally, involved in peptide bond synthesis. Stimulates efficient translation and peptide-bond synthesis on native or reconstituted 70S ribosomes in vitro. Probably functions indirectly by altering the affinity of the ribosome for aminoacyl-tRNA, thus increasing their reactivity as acceptors for peptidyl transferase. The polypeptide is Elongation factor P (Bartonella bacilliformis (strain ATCC 35685 / KC583 / Herrer 020/F12,63)).